We begin with the raw amino-acid sequence, 476 residues long: Nodulation protein NoeA (476 aa).

Its function is as follows. Not known; does not seem to participate in nod factor synthesis but required for nodulation on some specific Medicago species such as M.littoralis. In Rhizobium meliloti (strain 1021) (Ensifer meliloti), this protein is Nodulation protein NoeA (noeA).